A 169-amino-acid polypeptide reads, in one-letter code: uncharacterized protein (169 aa).

Helical transmembrane passes span 10-30 (NVHMYDVAIILILIIVVFKLI) and 149-169 (IPLAFVQMIAISIALICLLIP).

The protein localises to the membrane. This is an uncharacterized protein from Dictyostelium discoideum (Social amoeba).